The following is a 198-amino-acid chain: Recombination protein RecR (198 aa).

A C4-type zinc finger spans residues 56 to 71 (CGVCGNVDTSNPCGIC). Residues 79–174 (RSICVVEEVA…RVTQLAHGLP (96 aa)) form the Toprim domain.

Belongs to the RecR family.

May play a role in DNA repair. It seems to be involved in an RecBC-independent recombinational process of DNA repair. It may act with RecF and RecO. This Novosphingobium aromaticivorans (strain ATCC 700278 / DSM 12444 / CCUG 56034 / CIP 105152 / NBRC 16084 / F199) protein is Recombination protein RecR.